A 25-amino-acid chain; its full sequence is Small ribosomal subunit protein eS32 (25 aa).

Residues 1-25 form a disordered region; sequence MRAKWRKKRVRRLKRKRRKVRARSK.

The protein belongs to the eukaryotic ribosomal protein eS32 family. As to quaternary structure, component of the small ribosomal subunit.

This is Small ribosomal subunit protein eS32 (RPL41) from Eremothecium gossypii (strain ATCC 10895 / CBS 109.51 / FGSC 9923 / NRRL Y-1056) (Yeast).